Here is a 241-residue protein sequence, read N- to C-terminus: MORN repeat-containing protein 3 (241 aa).

The interaction with MDM2 stretch occupies residues C6–G35. MORN repeat units follow at residues Y38–A60, Y62–T84, Y91–Y113, Y114–I136, Y137–R159, Y160–Q182, and F184–E205. Residues T76–K100 form an interaction with SIRT1 region. An interaction with TP53 region spans residues A206–G240.

Interacts with MEIG1. Interacts with TP53, MDM2 and SIRT1; the interactions mediate post-transcriptional modifications of TP53 by MDM2 and SIRT1.

It is found in the cytoplasmic vesicle. The protein localises to the secretory vesicle. Its subcellular location is the acrosome. In terms of biological role, assembles a suppression complex (suppresome) by tethering SIRT1 and MDM2 to regulate composite modifications of p53/TP53. Confers both deacetylation-mediated functional inactivation, by SIRT1, and ubiquitination-dependent degradation, by MDM2, of p53/TP53, promoting a proliferative and cell survival behaviors. May play a role in the regulation of spermatogenesis. This Bos taurus (Bovine) protein is MORN repeat-containing protein 3 (MORN3).